The following is a 538-amino-acid chain: Inositol phosphate phosphatase IpgD (538 aa).

Cys-439 is an active-site residue. The CX5R motif motif lies at Cys-439–Arg-445.

It belongs to the phosphatase IpgD/SopB family.

The protein resides in the secreted. It catalyses the reaction a 1,2-diacyl-sn-glycero-3-phospho-(1D-myo-inositol-4,5-bisphosphate) + H2O = a 1,2-diacyl-sn-glycero-3-phospho-(1D-myo-inositol-5-phosphate) + phosphate. Converts phosphatidylinositol 4,5-bisphosphate (PtdIns 4,5-P2) to PtdIns 5-P. IpgD is injected by Shigella into the host cell and is required for invasion. The accumulation of PtdIns 5-P causes membrane ruffling and actin cytoskeleton rearrangements at the entry site. This Shigella sonnei protein is Inositol phosphate phosphatase IpgD (ipgD).